Reading from the N-terminus, the 294-residue chain is Basic endochitinase (294 aa).

An N-terminal signal peptide occupies residues 1 to 24 (MNIKVSLLFILPIFLLLLTSKVKA). Residues 25 to 294 (GDIVVYWGQD…GYSSAIRGAV (270 aa)) enclose the GH18 domain. 2 cysteine pairs are disulfide-bonded: Cys44–Cys91 and Cys74–Cys81. Glu151 serves as the catalytic Proton donor. A disulfide bridge connects residues Cys182 and Cys211.

Belongs to the glycosyl hydrolase 18 family. Chitinase class II subfamily.

The catalysed reaction is Random endo-hydrolysis of N-acetyl-beta-D-glucosaminide (1-&gt;4)-beta-linkages in chitin and chitodextrins.. Functionally, this protein functions as a defense against chitin containing fungal pathogens. The sequence is that of Basic endochitinase from Nicotiana tabacum (Common tobacco).